A 590-amino-acid polypeptide reads, in one-letter code: Aspartate--tRNA ligase (590 aa).

Residue Glu175 participates in L-aspartate binding. The segment at 199–202 is aspartate; the sequence is QIFK. Arg221 serves as a coordination point for L-aspartate. ATP is bound by residues 221-223 and Gln230; that span reads RDE. His449 serves as a coordination point for L-aspartate. Position 483 (Glu483) interacts with ATP. Arg490 lines the L-aspartate pocket. 535–538 is an ATP binding site; the sequence is GLDR.

The protein belongs to the class-II aminoacyl-tRNA synthetase family. Type 1 subfamily. As to quaternary structure, homodimer.

It is found in the cytoplasm. The enzyme catalyses tRNA(Asp) + L-aspartate + ATP = L-aspartyl-tRNA(Asp) + AMP + diphosphate. Its function is as follows. Catalyzes the attachment of L-aspartate to tRNA(Asp) in a two-step reaction: L-aspartate is first activated by ATP to form Asp-AMP and then transferred to the acceptor end of tRNA(Asp). In Geobacillus kaustophilus (strain HTA426), this protein is Aspartate--tRNA ligase.